The chain runs to 128 residues: 2-iminobutanoate/2-iminopropanoate deaminase (128 aa).

Residue R105 participates in substrate binding.

The protein belongs to the RutC family. In terms of assembly, homotrimer.

It is found in the cytoplasm. The enzyme catalyses 2-iminobutanoate + H2O = 2-oxobutanoate + NH4(+). It catalyses the reaction 2-iminopropanoate + H2O = pyruvate + NH4(+). It functions in the pathway amino-acid biosynthesis; L-isoleucine biosynthesis; 2-oxobutanoate from L-threonine. Accelerates the release of ammonia from reactive enamine/imine intermediates of the PLP-dependent threonine dehydratase (IlvA) in the low water environment of the cell. It catalyzes the deamination of enamine/imine intermediates to yield 2-ketobutyrate and ammonia. It is required for the detoxification of reactive intermediates of IlvA due to their highly nucleophilic abilities and to avoid they are captured by anthranilate phosphoribosyltransferase (TrpD) to generate PRA, an intermediate in the alternative pyrimidine biosynthetic (APB) pathway. Also required for full activity of IlvE which is involved in the isoleucine biosynthesis. RidA also accelerates the release of pyruvate produced by IlvA from L-serine. The polypeptide is 2-iminobutanoate/2-iminopropanoate deaminase (Salmonella typhimurium (strain LT2 / SGSC1412 / ATCC 700720)).